The sequence spans 338 residues: 1-aminocyclopropane-1-carboxylate deaminase (338 aa).

N6-(pyridoxal phosphate)lysine is present on Lys-51. Ser-78 (nucleophile) is an active-site residue.

This sequence belongs to the ACC deaminase/D-cysteine desulfhydrase family. Pyridoxal 5'-phosphate is required as a cofactor.

It catalyses the reaction 1-aminocyclopropane-1-carboxylate + H2O = 2-oxobutanoate + NH4(+). Its function is as follows. Catalyzes a cyclopropane ring-opening reaction, the irreversible conversion of 1-aminocyclopropane-1-carboxylate (ACC) to ammonia and alpha-ketobutyrate. Allows growth on ACC as a nitrogen source. The sequence is that of 1-aminocyclopropane-1-carboxylate deaminase from Enterobacter cloacae.